We begin with the raw amino-acid sequence, 1217 residues long: ATP-dependent helicase/nuclease subunit A (1217 aa).

The 466-residue stretch at 10 to 475 (VIWTDAQWQS…IDLSQNFRSR (466 aa)) folds into the UvrD-like helicase ATP-binding domain. An ATP-binding site is contributed by 31 to 38 (AAAGSGKT). Residues 476–786 (KEVLSTTNYI…RMMTIHSSKG (311 aa)) enclose the UvrD-like helicase C-terminal domain.

The protein belongs to the helicase family. AddA subfamily. Heterodimer of AddA and AddB/RexB. It depends on Mg(2+) as a cofactor.

The enzyme catalyses Couples ATP hydrolysis with the unwinding of duplex DNA by translocating in the 3'-5' direction.. It catalyses the reaction ATP + H2O = ADP + phosphate + H(+). Its function is as follows. The heterodimer acts as both an ATP-dependent DNA helicase and an ATP-dependent, dual-direction single-stranded exonuclease. Recognizes the chi site generating a DNA molecule suitable for the initiation of homologous recombination. The AddA nuclease domain is required for chi fragment generation; this subunit has the helicase and 3' -&gt; 5' nuclease activities. This chain is ATP-dependent helicase/nuclease subunit A, found in Staphylococcus aureus (strain MRSA252).